Here is a 111-residue protein sequence, read N- to C-terminus: UPF0060 membrane protein Pden_1837 (111 aa).

A run of 4 helical transmembrane segments spans residues 7-27, 30-50, 62-82, and 91-111; these read IAVYVLAALAEIAGCFAFWAW, LGKSPLWLVPGMVSLAVFAWL, AYAAYGGIYVTASLGWLWLTE, and ILGGGLCVLGAMVILAGPRAA.

Belongs to the UPF0060 family.

The protein localises to the cell inner membrane. This is UPF0060 membrane protein Pden_1837 from Paracoccus denitrificans (strain Pd 1222).